The chain runs to 238 residues: Ribonuclease PH (238 aa).

Residues arginine 86 and 124 to 126 contribute to the phosphate site; that span reads GTR.

It belongs to the RNase PH family. In terms of assembly, homohexameric ring arranged as a trimer of dimers.

It catalyses the reaction tRNA(n+1) + phosphate = tRNA(n) + a ribonucleoside 5'-diphosphate. In terms of biological role, phosphorolytic 3'-5' exoribonuclease that plays an important role in tRNA 3'-end maturation. Removes nucleotide residues following the 3'-CCA terminus of tRNAs; can also add nucleotides to the ends of RNA molecules by using nucleoside diphosphates as substrates, but this may not be physiologically important. Probably plays a role in initiation of 16S rRNA degradation (leading to ribosome degradation) during starvation. This chain is Ribonuclease PH, found in Caulobacter vibrioides (strain ATCC 19089 / CIP 103742 / CB 15) (Caulobacter crescentus).